The chain runs to 262 residues: Snake venom serine protease (262 aa).

A signal peptide spans 1 to 18; the sequence is MVLIRVLANLLILQLSYA. Residues 19 to 24 constitute a propeptide that is removed on maturation; sequence QKSSEL. A Peptidase S1 domain is found at 25 to 253; the sequence is VIGGDECNIN…YTEWIQSIIA (229 aa). 6 disulfide bridges follow: Cys31–Cys167, Cys50–Cys66, Cys102–Cys260, Cys146–Cys214, Cys178–Cys193, and Cys204–Cys229. Active-site charge relay system residues include His65 and Asp114. Asn125 and Asn158 each carry an N-linked (GlcNAc...) asparagine glycan. Residue Ser208 is the Charge relay system of the active site.

The protein belongs to the peptidase S1 family. Snake venom subfamily. As to quaternary structure, monomer. Expressed by the venom gland.

It is found in the secreted. In terms of biological role, snake venom serine protease that may act in the hemostasis system of the prey. The sequence is that of Snake venom serine protease from Crotalus durissus durissus (Central American rattlesnake).